We begin with the raw amino-acid sequence, 384 residues long: Nodal homolog 2-B (384 aa).

A signal peptide spans 1–18; sequence MASLGAILLFAIASLMHG. A propeptide spanning residues 19 to 283 is cleaved from the precursor; that stretch reads RPIHSDRKGA…RVADARRHRR (265 aa). N-linked (GlcNAc...) asparagine glycosylation is found at asparagine 71, asparagine 173, and asparagine 344. Cysteine 306 and cysteine 372 are joined by a disulfide.

It belongs to the TGF-beta family. As to quaternary structure, homodimer; disulfide-linked. Forms heterodimers with the TGF-beta family member derriere. Interacts with tsku; enhances nodal2 activity.

Its subcellular location is the secreted. Functionally, cooperation and regulatory loops of multiple nodals are essential for mesendoderm patterning in early embryos. Essential for mesoderm formation and axial patterning during embryonic development. Activates the activin-like signaling pathway to induce dorsal and ventral mesoderm in animal cap ectoderm. In addition, also dorsalizes ventral marginal zone (VMZ) tissues during gastrulation. Induces muscle actin. Appears to act as both a short-range and long-range morphogen. The unprocessed protein inhibits bmp- and wnt-signaling. This is Nodal homolog 2-B (nodal2-b) from Xenopus laevis (African clawed frog).